The primary structure comprises 663 residues: MYSTVFYTSVHPSTSAFSRKQLPLLISKDFPTELYHSLPCSRSLENGQIKKVKGVVKATIAEAPATIPPTDLKKVPQKKLKVLVAGGGIGGLVFALAAKKRGFDVLVFERDLSAIRGEGQYRGPIQIQSNALAALEAIDMDVAEDIMNAGCITGQRINGLVDGVSGNWYCKFDTFTPAVERGLPVTRVISRMTLQQNLARAVGEDIIMNESNVVNFEDDGEKVTVTLEDGQQYTGDLLVGADGIRSKVRTNLFGPSDVTYSGYTCYTGIADFVPADIETVGYRVFLGHKQYFVSSDVGGGKMQWYAFHNEPAGGVDDPNGKKARLLKIFEGWCDNVIDLLVATDEDAILRRDIYDRPPTFSWGKGRVTLLGDSVHAMQPNLGQGGCMAIEDSYQLALELDKALSRSAESGTPVDIISSLRSYESSRKLRVGVIHGLARMAAIMASTYKAYLGVGLGPLSFLTKFRIPHPGRVGGRFFIDLGMPLMLSWVLGGNGEKLEGRIQHCRLSEKANDQLRNWFEDDDALERATDAEWLLLPAGNSNAALETLVLSRDENMPCNIGSVSHANIPGKSVVIPLPQVSEMHARISYKGGAFFVTDLRSEHGTWITDNEGRRYRASPNFPTRFHPSDIIEFGSDKKAAFRVKVMKFPPKTAAKEERQAVGAA.

The N-terminal 50 residues, 1–50 (MYSTVFYTSVHPSTSAFSRKQLPLLISKDFPTELYHSLPCSRSLENGQIK), are a transit peptide targeting the chloroplast. FAD contacts are provided by residues 81-109 (KVLV…LVFE) and 359-372 (TFSW…LLGD). Residues 547-611 (LVLSRDENMP…HGTWITDNEG (65 aa)) form the FHA domain.

FAD serves as cofactor. As to expression, higher expression in leaves than in roots.

The protein resides in the plastid. It localises to the chloroplast membrane. Its subcellular location is the chloroplast thylakoid membrane. It carries out the reaction all-trans-zeaxanthin + 4 reduced [2Fe-2S]-[ferredoxin] + 2 O2 + 4 H(+) = all-trans-violaxanthin + 4 oxidized [2Fe-2S]-[ferredoxin] + 2 H2O. Its pathway is plant hormone biosynthesis; abscisate biosynthesis. Converts zeaxanthin into antheraxanthin and subsequently violaxanthin. Involved in the epoxidation of zeaxanthin. Plays an important role in resistance to stresses, seed development and dormancy. The protein is Zeaxanthin epoxidase, chloroplastic (ABA2) of Nicotiana plumbaginifolia (Leadwort-leaved tobacco).